A 437-amino-acid chain; its full sequence is Argininosuccinate lyase (437 aa).

Belongs to the lyase 1 family. Argininosuccinate lyase subfamily.

The protein resides in the cytoplasm. The enzyme catalyses 2-(N(omega)-L-arginino)succinate = fumarate + L-arginine. It functions in the pathway amino-acid biosynthesis; L-arginine biosynthesis; L-arginine from L-ornithine and carbamoyl phosphate: step 3/3. The protein is Argininosuccinate lyase of Clostridium novyi (strain NT).